The following is a 419-amino-acid chain: UDP-N-acetylglucosamine 1-carboxyvinyltransferase 2 (419 aa).

Position 22 to 23 (22 to 23 (KN)) interacts with phosphoenolpyruvate. Arg92 contributes to the UDP-N-acetyl-alpha-D-glucosamine binding site. Cys116 serves as the catalytic Proton donor. At Cys116 the chain carries 2-(S-cysteinyl)pyruvic acid O-phosphothioketal. UDP-N-acetyl-alpha-D-glucosamine is bound by residues 121-125 (RPIDL), Asp306, and Ile328.

It belongs to the EPSP synthase family. MurA subfamily.

It localises to the cytoplasm. The enzyme catalyses phosphoenolpyruvate + UDP-N-acetyl-alpha-D-glucosamine = UDP-N-acetyl-3-O-(1-carboxyvinyl)-alpha-D-glucosamine + phosphate. It functions in the pathway cell wall biogenesis; peptidoglycan biosynthesis. Its function is as follows. Cell wall formation. Adds enolpyruvyl to UDP-N-acetylglucosamine. The sequence is that of UDP-N-acetylglucosamine 1-carboxyvinyltransferase 2 from Streptococcus pyogenes serotype M18 (strain MGAS8232).